The following is a 207-amino-acid chain: Large ribosomal subunit protein uL4 (207 aa).

Residues 44-85 (MRQGTHKTKNRAEVSGGGRKPWRQKGTGRARQGSIRSPQWRG) form a disordered region.

This sequence belongs to the universal ribosomal protein uL4 family. In terms of assembly, part of the 50S ribosomal subunit.

One of the primary rRNA binding proteins, this protein initially binds near the 5'-end of the 23S rRNA. It is important during the early stages of 50S assembly. It makes multiple contacts with different domains of the 23S rRNA in the assembled 50S subunit and ribosome. Functionally, forms part of the polypeptide exit tunnel. The protein is Large ribosomal subunit protein uL4 of Geobacillus thermodenitrificans (strain NG80-2).